The following is a 124-amino-acid chain: MALSKDDILNAIAEMSVMEVVELVEAMEEKFNVSAAAAVAAAPAAAAAGEAAEEKTEFDVVLTGAGEKKVNVIKAVRELTGLGLKEAKEMVDGAPSTVKEGASKDEAEEAKKKLEEAGASVELK.

The tract at residues 93 to 124 is disordered; that stretch reads GAPSTVKEGASKDEAEEAKKKLEEAGASVELK. Residues 101 to 116 are compositionally biased toward basic and acidic residues; that stretch reads GASKDEAEEAKKKLEE.

Belongs to the bacterial ribosomal protein bL12 family. Homodimer. Part of the ribosomal stalk of the 50S ribosomal subunit. Forms a multimeric L10(L12)X complex, where L10 forms an elongated spine to which 2 to 4 L12 dimers bind in a sequential fashion. Binds GTP-bound translation factors.

In terms of biological role, forms part of the ribosomal stalk which helps the ribosome interact with GTP-bound translation factors. Is thus essential for accurate translation. This is Large ribosomal subunit protein bL12 from Marinobacter nauticus (strain ATCC 700491 / DSM 11845 / VT8) (Marinobacter aquaeolei).